The chain runs to 446 residues: Mannan endo-1,6-alpha-mannosidase DCW1 (446 aa).

A signal peptide spans 1 to 18 (MRLVTLLSGLVSLVSVFG). 12 N-linked (GlcNAc...) asparagine glycosylation sites follow: Asn-31, Asn-81, Asn-106, Asn-200, Asn-222, Asn-237, Asn-262, Asn-278, Asn-285, Asn-334, Asn-391, and Asn-397. Residues 389 to 408 (PYNATNGGNSTGDGAAGTKP) form a disordered region. Ser-422 is lipidated: GPI-anchor amidated serine. Residues 423–446 (RAGAGIITAIIGISIIACALWLVY) constitute a propeptide, removed in mature form.

It belongs to the glycosyl hydrolase 76 family.

It is found in the secreted. The protein resides in the cell wall. Its subcellular location is the cell membrane. The catalysed reaction is Random hydrolysis of (1-&gt;6)-alpha-D-mannosidic linkages in unbranched (1-&gt;6)-mannans.. Required for normal synthesis of the cell wall. The sequence is that of Mannan endo-1,6-alpha-mannosidase DCW1 (DCW1) from Candida glabrata (strain ATCC 2001 / BCRC 20586 / JCM 3761 / NBRC 0622 / NRRL Y-65 / CBS 138) (Yeast).